We begin with the raw amino-acid sequence, 341 residues long: N-acetyl-gamma-glutamyl-phosphate reductase (341 aa).

Cys151 is an active-site residue.

The protein belongs to the NAGSA dehydrogenase family. Type 1 subfamily.

It is found in the cytoplasm. The catalysed reaction is N-acetyl-L-glutamate 5-semialdehyde + phosphate + NADP(+) = N-acetyl-L-glutamyl 5-phosphate + NADPH + H(+). It participates in amino-acid biosynthesis; L-arginine biosynthesis; N(2)-acetyl-L-ornithine from L-glutamate: step 3/4. In terms of biological role, catalyzes the NADPH-dependent reduction of N-acetyl-5-glutamyl phosphate to yield N-acetyl-L-glutamate 5-semialdehyde. In Chlorobaculum tepidum (strain ATCC 49652 / DSM 12025 / NBRC 103806 / TLS) (Chlorobium tepidum), this protein is N-acetyl-gamma-glutamyl-phosphate reductase.